The sequence spans 357 residues: GTPase Obg (357 aa).

Residues 1–159 (MKFVDEAFID…RNLKLELKVL (159 aa)) form the Obg domain. Positions 160–334 (ADVGLLGMPN…LVQSIFQHVH (175 aa)) constitute an OBG-type G domain. Residues 166 to 173 (GMPNAGKS), 191 to 195 (FTTLH), 213 to 216 (DIPG), 284 to 287 (NKLD), and 315 to 317 (SAL) each bind GTP. Positions 173 and 193 each coordinate Mg(2+).

Belongs to the TRAFAC class OBG-HflX-like GTPase superfamily. OBG GTPase family. As to quaternary structure, monomer. Mg(2+) is required as a cofactor.

The protein localises to the cytoplasm. Functionally, an essential GTPase which binds GTP, GDP and possibly (p)ppGpp with moderate affinity, with high nucleotide exchange rates and a fairly low GTP hydrolysis rate. Plays a role in control of the cell cycle, stress response, ribosome biogenesis and in those bacteria that undergo differentiation, in morphogenesis control. This Acidovorax ebreus (strain TPSY) (Diaphorobacter sp. (strain TPSY)) protein is GTPase Obg.